Here is a 1152-residue protein sequence, read N- to C-terminus: Nardilysin (1152 aa).

The N-terminal stretch at 1–20 (MLRKVTVAAVCATRRKLCEA) is a signal peptide. Disordered regions lie at residues 81–108 (LGAD…KSPS) and 133–208 (MEGK…KKTT). Residues serine 86, serine 94, and serine 96 each carry the phosphoserine modification. A compositionally biased stretch (acidic residues) spans 141 to 198 (TDDEEEEEVEEEEEDDDEDSGAEIEDDDEEGFDDEDEFDDEHDDDLDTEDNELEELEE). Residue histidine 234 coordinates Zn(2+). Glutamate 237 (proton acceptor) is an active-site residue. Zn(2+) is bound by residues histidine 238 and glutamate 315.

It belongs to the peptidase M16 family. As to quaternary structure, interacts with BACE1 and NRG1. Zn(2+) is required as a cofactor.

Its subcellular location is the mitochondrion. It localises to the cell projection. It is found in the dendrite. It catalyses the reaction Hydrolysis of polypeptides, preferably at -Xaa-|-Arg-Lys-, and less commonly at -Arg-|-Arg-Xaa-, in which Xaa is not Arg or Lys.. Cleaves peptide substrates on the N-terminus of arginine residues in dibasic pairs. Is a critical activator of BACE1- and ADAM17-mediated pro-neuregulin ectodomain shedding, involved in the positive regulation of axonal maturation and myelination. Required for proper functioning of 2-oxoglutarate dehydrogenase (OGDH). The protein is Nardilysin of Pongo abelii (Sumatran orangutan).